Reading from the N-terminus, the 875-residue chain is GATOR2 complex protein MIOS (875 aa).

WD repeat units follow at residues 58 to 100 (SDTP…NSKF), 111 to 155 (KHAR…TPDI), 182 to 221 (GQND…QKMF), 223 to 261 (NTKA…KPVL), 265 to 306 (EQPK…TPIG), 320 to 360 (PCDN…SLAW), and 395 to 437 (RLRA…KQYT). Residues 735–781 (VSCNFCGKSISYSCSSVPHQGRGFSQYGVSGSPTKSKVTSCPGCRKP) form a C4-type zinc finger. The Zn(2+) site is built by Cys-737 and Cys-740. Phosphoserine is present on residues Ser-759 and Ser-766. Cys-775, Cys-778, Cys-788, Cys-827, Cys-830, His-832, His-835, His-838, Cys-849, Cys-854, and Cys-858 together coordinate Zn(2+). Residues 782–863 (LPRCALCLIN…CTCKCMQLDT (82 aa)) form an RING-type; atypical zinc finger.

This sequence belongs to the WD repeat mio family. As to quaternary structure, component of the GATOR2 subcomplex, composed of MIOS, SEC13, SEH1L, WDR24 and WDR59. The GATOR2 complex interacts with CASTOR1 and CASTOR2; the interaction is negatively regulated by arginine. CASTOR1 and CASTOR2 convey leucine availability via direct interaction with MIOS. The GATOR2 complex interacts with SESN1, SESN2 and SESN3; the interaction is negatively regulated by amino acids. Interacts with SAR1A and SAR1B; the interaction is direct, disrupted by leucine and mediates the interaction of SAR1A or SAR1B with the GATOR2 complex to negatively regulate the TORC1 signaling upon leucine deprivation. Widely expressed. In brain, expressed in neurons and glia (oligodendrocytes and astrocytes), with more abundance in neurons.

Its subcellular location is the lysosome membrane. With respect to regulation, the GATOR2 complex is negatively regulated by the upstream amino acid sensors CASTOR1 and SESN2, which sequester the GATOR2 complex in absence of amino acids. In the presence of abundant amino acids, GATOR2 is released from CASTOR1 and SESN2 and activated. As a component of the GATOR2 complex, functions as an activator of the amino acid-sensing branch of the mTORC1 signaling pathway. The GATOR2 complex indirectly activates mTORC1 through the inhibition of the GATOR1 subcomplex. GATOR2 probably acts as an E3 ubiquitin-protein ligase toward GATOR1. In the presence of abundant amino acids, the GATOR2 complex mediates ubiquitination of the NPRL2 core component of the GATOR1 complex, leading to GATOR1 inactivation. In the absence of amino acids, GATOR2 is inhibited, activating the GATOR1 complex. Within the GATOR2 complex, MIOS is required to prevent autoubiquitination of WDR24, the catalytic subunit of the complex. The GATOR2 complex is required for brain myelination. This chain is GATOR2 complex protein MIOS, found in Mus musculus (Mouse).